Consider the following 119-residue polypeptide: Immunoglobulin lambda variable 2-11 (119 aa).

The first 19 residues, methionine 1–alanine 19, serve as a signal peptide directing secretion. Pyrrolidone carboxylic acid is present on glutamine 20. Residues glutamine 20–threonine 44 form a framework-1 region. The 100-residue stretch at glutamine 20–histidine 119 folds into the Ig-like domain. The cysteines at positions 41 and 109 are disulfide-linked. Positions serine 45–tyrosine 53 are complementarity-determining-1. The tract at residues valine 54–tyrosine 70 is framework-2. The tract at residues aspartate 71 to serine 73 is complementarity-determining-2. Positions lysine 74–cysteine 109 are framework-3. The complementarity-determining-3 stretch occupies residues cysteine 110–histidine 119.

As to quaternary structure, immunoglobulins are composed of two identical heavy chains and two identical light chains; disulfide-linked.

The protein resides in the secreted. Its subcellular location is the cell membrane. In terms of biological role, v region of the variable domain of immunoglobulin light chains that participates in the antigen recognition. Immunoglobulins, also known as antibodies, are membrane-bound or secreted glycoproteins produced by B lymphocytes. In the recognition phase of humoral immunity, the membrane-bound immunoglobulins serve as receptors which, upon binding of a specific antigen, trigger the clonal expansion and differentiation of B lymphocytes into immunoglobulins-secreting plasma cells. Secreted immunoglobulins mediate the effector phase of humoral immunity, which results in the elimination of bound antigens. The antigen binding site is formed by the variable domain of one heavy chain, together with that of its associated light chain. Thus, each immunoglobulin has two antigen binding sites with remarkable affinity for a particular antigen. The variable domains are assembled by a process called V-(D)-J rearrangement and can then be subjected to somatic hypermutations which, after exposure to antigen and selection, allow affinity maturation for a particular antigen. The protein is Immunoglobulin lambda variable 2-11 of Homo sapiens (Human).